The chain runs to 396 residues: 1-deoxy-D-xylulose 5-phosphate reductoisomerase (396 aa).

Threonine 13, glycine 14, serine 15, isoleucine 16, and asparagine 127 together coordinate NADPH. Lysine 128 is a 1-deoxy-D-xylulose 5-phosphate binding site. Residue glutamate 129 participates in NADPH binding. A Mn(2+)-binding site is contributed by aspartate 153. Residues serine 154, glutamate 155, serine 184, and histidine 207 each contribute to the 1-deoxy-D-xylulose 5-phosphate site. Glutamate 155 contacts Mn(2+). Glycine 213 lines the NADPH pocket. The 1-deoxy-D-xylulose 5-phosphate site is built by serine 220, asparagine 225, lysine 226, and glutamate 229. Mn(2+) is bound at residue glutamate 229.

The protein belongs to the DXR family. Mg(2+) is required as a cofactor. Requires Mn(2+) as cofactor.

The enzyme catalyses 2-C-methyl-D-erythritol 4-phosphate + NADP(+) = 1-deoxy-D-xylulose 5-phosphate + NADPH + H(+). The protein operates within isoprenoid biosynthesis; isopentenyl diphosphate biosynthesis via DXP pathway; isopentenyl diphosphate from 1-deoxy-D-xylulose 5-phosphate: step 1/6. Catalyzes the NADPH-dependent rearrangement and reduction of 1-deoxy-D-xylulose-5-phosphate (DXP) to 2-C-methyl-D-erythritol 4-phosphate (MEP). The polypeptide is 1-deoxy-D-xylulose 5-phosphate reductoisomerase (Pseudomonas aeruginosa (strain UCBPP-PA14)).